The sequence spans 3066 residues: Genome polyprotein (3066 aa).

In terms of domain architecture, Peptidase S30 spans 168–308; sequence TSQCRKPTYV…VENMEDIQHY (141 aa). Residues H221, E230, and S262 each act as for P1 proteinase activity in the active site. The short motif at 361–364 is the Involved in interaction with stylet and aphid transmission element; the sequence is KLSC. The Involved in virions binding and aphid transmission signature appears at 617 to 619; sequence PTK. The Peptidase C6 domain maps to 643-765; sequence MYIAKEGFCY…QSEMKFYRVG (123 aa). Catalysis depends on for helper component proteinase activity residues C651 and H724. Residues 1236 to 1388 form the Helicase ATP-binding domain; that stretch reads LVATSSHTEF…TQHPVKLKVE (153 aa). 1249–1256 contacts ATP; it reads GAVGSGKS. The DECH box motif lies at 1338 to 1341; sequence DECH. Residues 1407-1566 enclose the Helicase C-terminal domain; it reads DMIQHGNNLL…GLPVTTQSVS (160 aa). The Nuclear localization signal motif lies at 1891-1900; that stretch reads KKGKQKGSTR. Y1915 is subject to O-(5'-phospho-RNA)-tyrosine. A Peptidase C4 domain is found at 2042–2260; the sequence is SKSVYKGLRD…IAWGSLNLVE (219 aa). Active-site for nuclear inclusion protein A activity residues include H2087, D2122, and C2192. The region spanning 2526-2650 is the RdRp catalytic domain; the sequence is WVYCHADGSQ…AVSDKDTWLY (125 aa). The disordered stretch occupies residues 2799-2836; sequence SLQSGKEKEGDMDADKDPKKSTSSSKGAGTSSKDVNVG. A compositionally biased stretch (basic and acidic residues) spans 2803 to 2818; the sequence is GKEKEGDMDADKDPKK. The segment covering 2819–2831 has biased composition (low complexity); it reads STSSSKGAGTSSK. Position 3048 is a phosphothreonine (T3048).

It belongs to the potyviridae genome polyprotein family. In terms of assembly, interacts with host eIF4E protein (via cap-binding region); this interaction mediates the translation of the VPg-viral RNA conjugates. Part of a complex that comprises VPg, RNA, host EIF4E and EIF4G; this interaction mediates the translation of the VPg-viral RNA conjugates. Interacts with host eIF4E proteins in the host cytoplasm. Post-translationally, VPg is uridylylated by the polymerase and is covalently attached to the 5'-end of the genomic RNA. This uridylylated form acts as a nucleotide-peptide primer for the polymerase. In terms of processing, potyviral RNA is expressed as two polyproteins which undergo post-translational proteolytic processing. Genome polyprotein is processed by NIa-pro, P1 and HC-pro proteinases resulting in the production of at least ten individual proteins. P3N-PIPO polyprotein is cleaved by P1 and HC-pro proteinases resulting in the production of three individual proteins. The P1 proteinase and the HC-pro cleave only their respective C-termini autocatalytically. 6K1 is essential for proper proteolytic separation of P3 from CI.

It localises to the host cytoplasmic vesicle. Its subcellular location is the host cytoplasm. The protein localises to the host nucleus. It is found in the virion. The catalysed reaction is RNA(n) + a ribonucleoside 5'-triphosphate = RNA(n+1) + diphosphate. The enzyme catalyses Hydrolyzes glutaminyl bonds, and activity is further restricted by preferences for the amino acids in P6 - P1' that vary with the species of potyvirus, e.g. Glu-Xaa-Xaa-Tyr-Xaa-Gln-|-(Ser or Gly) for the enzyme from tobacco etch virus. The natural substrate is the viral polyprotein, but other proteins and oligopeptides containing the appropriate consensus sequence are also cleaved.. It catalyses the reaction Hydrolyzes a Gly-|-Gly bond at its own C-terminus, commonly in the sequence -Tyr-Xaa-Val-Gly-|-Gly, in the processing of the potyviral polyprotein.. Functionally, required for aphid transmission and also has proteolytic activity. Only cleaves a Gly-Gly dipeptide at its own C-terminus. Interacts with virions and aphid stylets. Acts as a suppressor of RNA-mediated gene silencing, also known as post-transcriptional gene silencing (PTGS), a mechanism of plant viral defense that limits the accumulation of viral RNAs. May have RNA-binding activity. Its function is as follows. Has helicase activity. It may be involved in replication. Indispensable for virus replication. Reduces the abundance of host transcripts related to jasmonic acid biosynthesis therefore altering the host defenses. In order to increase its own stability, decreases host protein degradation pathways. In terms of biological role, indispensable for virus replication. Functionally, mediates the cap-independent, EIF4E-dependent translation of viral genomic RNAs. Binds to the cap-binding site of host EIF4E and thus interferes with the host EIF4E-dependent mRNA export and translation. VPg-RNA directly binds EIF4E and is a template for transcription. Also forms trimeric complexes with EIF4E-EIF4G, which are templates for translation. Its function is as follows. Has RNA-binding and proteolytic activities. An RNA-dependent RNA polymerase that plays an essential role in the virus replication. In terms of biological role, involved in aphid transmission, cell-to-cell and systemis movement, encapsidation of the viral RNA and in the regulation of viral RNA amplification. The chain is Genome polyprotein from Glycine max (Soybean).